Reading from the N-terminus, the 497-residue chain is Cytochrome P450 2D19 (497 aa).

C443 is a heme binding site.

The protein belongs to the cytochrome P450 family. The cofactor is heme.

Its subcellular location is the endoplasmic reticulum membrane. It is found in the microsome membrane. It catalyses the reaction an organic molecule + reduced [NADPH--hemoprotein reductase] + O2 = an alcohol + oxidized [NADPH--hemoprotein reductase] + H2O + H(+). Its function is as follows. Responsible for the metabolism of many drugs and environmental chemicals that it oxidizes. The chain is Cytochrome P450 2D19 (CYP2D19) from Callithrix jacchus (White-tufted-ear marmoset).